The primary structure comprises 503 residues: Catalase (503 aa).

Positions 1–21 are cleaved as a signal peptide; sequence MHMSKSFLIISMGFVAVSVQA. Residues His72 and Asn145 contribute to the active site. Residue Tyr353 coordinates heme.

This sequence belongs to the catalase family. Heme is required as a cofactor.

The protein resides in the periplasm. It catalyses the reaction 2 H2O2 = O2 + 2 H2O. In terms of biological role, decomposes hydrogen peroxide into water and oxygen; serves to protect cells from the toxic effects of hydrogen peroxide. This chain is Catalase, found in Vibrio cholerae serotype O1 (strain ATCC 39315 / El Tor Inaba N16961).